The primary structure comprises 174 residues: NADH-ubiquinone oxidoreductase chain 6 (174 aa).

6 helical membrane passes run 1 to 21, 24 to 44, 47 to 67, 86 to 106, 111 to 131, and 151 to 171; these read MTYA…GFSS, SPIY…AIIL, GGGY…MVVF, VEVL…VLWV, GMVV…EGEG, and WLVV…IEIA.

This sequence belongs to the complex I subunit 6 family. As to quaternary structure, core subunit of respiratory chain NADH dehydrogenase (Complex I) which is composed of 45 different subunits.

The protein localises to the mitochondrion inner membrane. The enzyme catalyses a ubiquinone + NADH + 5 H(+)(in) = a ubiquinol + NAD(+) + 4 H(+)(out). Functionally, core subunit of the mitochondrial membrane respiratory chain NADH dehydrogenase (Complex I) which catalyzes electron transfer from NADH through the respiratory chain, using ubiquinone as an electron acceptor. Essential for the catalytic activity and assembly of complex I. This Pan troglodytes (Chimpanzee) protein is NADH-ubiquinone oxidoreductase chain 6 (MT-ND6).